We begin with the raw amino-acid sequence, 485 residues long: Glutamyl-tRNA(Gln) amidotransferase subunit A (485 aa).

Active-site charge relay system residues include Lys78 and Ser153. Catalysis depends on Ser177, which acts as the Acyl-ester intermediate.

This sequence belongs to the amidase family. GatA subfamily. Heterotrimer of A, B and C subunits.

The enzyme catalyses L-glutamyl-tRNA(Gln) + L-glutamine + ATP + H2O = L-glutaminyl-tRNA(Gln) + L-glutamate + ADP + phosphate + H(+). In terms of biological role, allows the formation of correctly charged Gln-tRNA(Gln) through the transamidation of misacylated Glu-tRNA(Gln) in organisms which lack glutaminyl-tRNA synthetase. The reaction takes place in the presence of glutamine and ATP through an activated gamma-phospho-Glu-tRNA(Gln). The polypeptide is Glutamyl-tRNA(Gln) amidotransferase subunit A (Lawsonia intracellularis (strain PHE/MN1-00)).